A 2326-amino-acid chain; its full sequence is Probable voltage-dependent N-type calcium channel subunit alpha-1B (2326 aa).

Over 1-83 (MARLGNDVPA…DNIIRKYAKR (83 aa)) the chain is Cytoplasmic. Residues 17 to 37 (AGGGRGANRHAGPQAGQRGMY) are disordered. One copy of the I repeat lies at 75-351 (NIIRKYAKRI…LVLGVLSGEF (277 aa)). A helical transmembrane segment spans residues 84–107 (ITEWPPFEYMILATIIANCIVLAL). At 108–124 (EQHLPDGDKTPMSERLD) the chain is on the extracellular side. The helical transmembrane segment at 125–145 (DTEPYFIGIFCFEAGIKIIAL) threads the bilayer. Residues 146-156 (GFAFHKGSYLR) lie on the Cytoplasmic side of the membrane. The chain crosses the membrane as a helical span at residues 157–175 (NGWNVMDFVVVLTGILTTI). The Extracellular portion of the chain corresponds to 176-180 (GTDFD). The helical transmembrane segment at 181–204 (LRTLRAVRVLRPLKLVSGIPSLQV) threads the bilayer. At 205–214 (VLKSIMKAMV) the chain is on the cytoplasmic side. Residues 215-237 (PLLQIGLLLFFAILMFAIIGLEF) traverse the membrane as a helical segment. At 238–323 (YMGKFHKTCF…TANDALGNTW (86 aa)) the chain is on the extracellular side. N-linked (GlcNAc...) asparagine glycosylation is present at Asn271. A helical membrane pass occupies residues 324 to 348 (NWLYFIPLIVIGSFFMLNLVLGVLS). The Cytoplasmic segment spans residues 349–472 (GEFAKERERV…FFIRRMVKSQ (124 aa)). The interval 371-388 (QQVEQEFNRYLRWIHIAE) is binding to the beta subunit. An II repeat occupies 458–702 (EKRFRFFIRR…VFLAIAVDNL (245 aa)). The chain crosses the membrane as a helical span at residues 473-491 (SFYWIVLCLVGLNTLCVAI). Over 492–501 (VHYDQPPLLT) the chain is Extracellular. Residues 502–524 (DALYFAEFVFLGLFLTEMSLKMY) form a helical membrane-spanning segment. Over 525-534 (GLGPRNYFHS) the chain is Cytoplasmic. Residue Ser534 coordinates a 1,2-diacyl-sn-glycero-3-phospho-(1D-myo-inositol-4,5-bisphosphate). Residues 535–556 (SFNCFDFGVIVGSIFEVVWTAV) traverse the membrane as a helical segment. Residues 557-563 (KPDTSFG) are Extracellular-facing. The helical transmembrane segment at 564–576 (ISVLRALRLLRIF) threads the bilayer. 2 residues coordinate a 1,2-diacyl-sn-glycero-3-phospho-(1D-myo-inositol-4,5-bisphosphate): Arg574 and Lys577. Residues 577–594 (KVTKYWNSLRNLVVSLLN) are Cytoplasmic-facing. Residues 595–620 (SMKSIISLLFLLFLFIVVFALLGMQL) form a helical membrane-spanning segment. The Extracellular segment spans residues 621 to 672 (FGGQFNFEDGTPPTNFDTFPAAILTVFQILTGEDWNEVMYYGIEAHGGVKKG). A helical transmembrane segment spans residues 673–699 (MFSSVYFIILTLFGNYTLLNVFLAIAV). Residues 700–1148 (DNLANAQELT…ACHYIVNLRY (449 aa)) are Cytoplasmic-facing. Residues 793–1048 (SHQIRPDMKT…LQHLPQQPED (256 aa)) are disordered. Composition is skewed to basic and acidic residues over residues 796–808 (IRPDMKTHLDRPL), 854–879 (KLGEQDKGDGALDTGEPRANSKDDKR), 886–908 (SKETEKERDEKGRKGERSRSHEG), 935–979 (HGTE…EGAE), and 994–1011 (SEEKREIGEKERETVLRE). Residues 1020 to 1032 (TQPSQDSGTQGNV) show a composition bias toward polar residues. One copy of the III repeat lies at 1134-1416 (NPVRRACHYI…IFVALIIITF (283 aa)). A helical membrane pass occupies residues 1149–1167 (FEMCILLVITMSSIALAAE). The Extracellular portion of the chain corresponds to 1168-1175 (DPVQGDAP). The helical transmembrane segment at 1176 to 1200 (RNNVLKYLDYVFTGVFTFEMVIKMI) threads the bilayer. Residues 1201–1214 (NLGLILHPGSYFRD) are Cytoplasmic-facing. A helical membrane pass occupies residues 1215 to 1235 (LWNILDFIVVSGALVAFAFTG). Over 1236 to 1241 (SRGKDL) the chain is Extracellular. The helical transmembrane segment at 1242 to 1262 (NTIKSLRVLRVLRPLKTIKRL) threads the bilayer. The Cytoplasmic segment spans residues 1263-1280 (PKLKAVFDCVVNSLKNVL). Residues 1281-1300 (NILIVYMLFMFIFAVIAVQL) traverse the membrane as a helical segment. Residues 1301 to 1387 (FKGKFFYCTD…DQGPSPSYRM (87 aa)) are Extracellular-facing. A helical transmembrane segment spans residues 1388 to 1413 (EMSIFYVVYFVVFPFFFVNIFVALII). Over 1414 to 1468 (ITFQEQGDKVMSDCSLEKNERACIDFAISAKPLTRYMPQNKQTFQYKMWKFVVSP) the chain is Cytoplasmic. The IV repeat unit spans residues 1453-1708 (NKQTFQYKMW…LFVAVIMDNF (256 aa)). Residues 1469-1487 (PFEYLIMALIALNTIVLMM) form a helical membrane-spanning segment. The Extracellular portion of the chain corresponds to 1488-1495 (KFYNAPDP). The chain crosses the membrane as a helical span at residues 1496-1520 (YDRMLQYLNILFTFLFSMECVLKLI). Residues 1521-1530 (GFGVLNYFRD) lie on the Cytoplasmic side of the membrane. The chain crosses the membrane as a helical span at residues 1531-1552 (AWNVFDFVTVLGSITDILVTEL). The Extracellular segment spans residues 1553 to 1558 (ADSFIN). N-linked (GlcNAc...) asparagine glycosylation is present at Asn1558. The chain crosses the membrane as a helical span at residues 1559-1577 (LSFLRLFRAARLIKLLRQG). The Cytoplasmic portion of the chain corresponds to 1578–1596 (YTIRILLWTFVQSFKALPY). A helical transmembrane segment spans residues 1597 to 1616 (VCLLIAMLFFIYAIIGMQVF). Residues 1617-1680 (GNIELDDDGA…IDGDECGSNF (64 aa)) are Extracellular-facing. The helical transmembrane segment at 1681 to 1704 (AYFYFVSFIFFSSFLMLNLFVAVI) threads the bilayer. At 1705 to 2326 (MDNFEYLTRD…YRETDEDDWC (622 aa)) the chain is on the cytoplasmic side. The EF-hand domain maps to 1721-1756 (HHLDEFIRVWAEYDPGARGRITYNDMYEMLRHMCPP). Asp1734, Arg1740, and Asp1745 together coordinate Ca(2+). Residues 1897–1912 (EEPSSYSTSHKNSVNP) show a composition bias toward polar residues. Disordered stretches follow at residues 1897 to 1916 (EEPSSYSTSHKNSVNPLYQG), 1932 to 1954 (CAEGKKEVPESHPEEAGVTKSSS), 2039 to 2242 (PHHH…SSDP), and 2271 to 2326 (TTAT…DDWC). Residues 1932-1948 (CAEGKKEVPESHPEEAG) are compositionally biased toward basic and acidic residues. Positions 2039 to 2055 (PHHHHHHHRCHHRREKK) are enriched in basic residues. 2 stretches are compositionally biased toward basic and acidic residues: residues 2056–2069 (QRSLERATNRHADE) and 2077–2104 (QLRDQSSKERERGRSQERRPPSSAEKQR). Composition is skewed to polar residues over residues 2142 to 2161 (GSGSVNDSPLQSASGSSTPS), 2275 to 2289 (GRSPRTSSFTTQPPQ), and 2302 to 2311 (GRSTGPSTAA).

It belongs to the calcium channel alpha-1 subunit (TC 1.A.1.11) family. Multisubunit complex consisting of alpha-1, alpha-2, beta and delta subunits in a 1:1:1:1 ratio. The channel activity is directed by the pore-forming and voltage-sensitive alpha-1 subunit. In many cases, this subunit is sufficient to generate voltage-sensitive calcium channel activity. The auxiliary subunits beta and alpha-2/delta linked by a disulfide bridge regulate the channel activity. Post-translationally, phosphorylated in vitro by CaM-kinase II, PKA, PKC and CGPK. As to expression, expression is higher in the electric lobe than in the forebrain.

It localises to the membrane. The isoform alpha-1B gives rise to N-type calcium currents. N-type calcium channels belong to the 'high-voltage activated' (HVA) group. The chain is Probable voltage-dependent N-type calcium channel subunit alpha-1B from Diplobatis ommata (Ocellated electric ray).